The sequence spans 349 residues: Increased DNA methylation 2 (349 aa).

The tract at residues E210–V230 is disordered. Residues E233–V349 enclose the sHSP domain.

Belongs to the small heat shock protein (HSP20) family. As to quaternary structure, homodimer or oligomer. May form an 16-mer complex. Interacts with MBD7 (via C-terminus). Interacts with IDM1 (via N-terminus). Interacts with IMD3. Part of a complex made of MBD7, IDM1, IDM2, IDM3 and ROS1. Expressed in cotyledons and hypocotyls in young seedlings.

The protein resides in the nucleus. The protein localises to the nucleoplasm. Functionally, prevents DNA hypermethylation and transcriptional silencing of transgenes and of some endogenous genes. May act as a molecular chaperone of IDM1, regulating its H3K18 acetylation activity. This Arabidopsis thaliana (Mouse-ear cress) protein is Increased DNA methylation 2.